A 532-amino-acid polypeptide reads, in one-letter code: Flavin-containing monooxygenase 3 (532 aa).

Residues 9–13, E32, 40–41, and 61–62 each bind FAD; these read GAGVS, LW, and NS. Residues 60 to 61 and 195 to 198 contribute to the NADP(+) site; these read SN and SGCD. Position 401 is a phosphoserine (S401). Residues 510–530 traverse the membrane as a helical segment; that stretch reads FFFHWLKLFAIPILLIAVFLV.

Belongs to the FMO family. The cofactor is FAD. Liver.

It is found in the microsome membrane. It localises to the endoplasmic reticulum membrane. It catalyses the reaction trimethylamine + NADPH + O2 = trimethylamine N-oxide + NADP(+) + H2O. The enzyme catalyses N,N-dimethylaniline + NADPH + O2 + H(+) = N,N-dimethylaniline N-oxide + NADP(+) + H2O. The catalysed reaction is hypotaurine + NADPH + O2 + H(+) = taurine + NADP(+) + H2O. It carries out the reaction (S)-nicotine + NADPH + O2 = trans-(S)-nicotine N(1')-oxide + NADP(+) + H2O. It catalyses the reaction albendazole + NADPH + O2 + H(+) = albendazole S-oxide + NADP(+) + H2O. In terms of biological role, essential hepatic enzyme that catalyzes the oxygenation of a wide variety of nitrogen- and sulfur-containing compounds including drugs as well as dietary compounds. Plays an important role in the metabolism of trimethylamine (TMA), via the production of trimethylamine N-oxide (TMAO) metabolite. TMA is generated by the action of gut microbiota using dietary precursors such as choline, choline containing compounds, betaine or L-carnitine. By regulating TMAO concentration, FMO3 directly impacts both platelet responsiveness and rate of thrombus formation. The polypeptide is Flavin-containing monooxygenase 3 (FMO3) (Homo sapiens (Human)).